The primary structure comprises 310 residues: Aspartate carbamoyltransferase catalytic subunit (310 aa).

Arg60 and Thr61 together coordinate carbamoyl phosphate. Lys88 is a binding site for L-aspartate. Residues Arg110, His138, and Gln141 each contribute to the carbamoyl phosphate site. L-aspartate is bound by residues Arg171 and Arg225. The carbamoyl phosphate site is built by Gly266 and Pro267.

Belongs to the aspartate/ornithine carbamoyltransferase superfamily. ATCase family. Heterododecamer (2C3:3R2) of six catalytic PyrB chains organized as two trimers (C3), and six regulatory PyrI chains organized as three dimers (R2).

The catalysed reaction is carbamoyl phosphate + L-aspartate = N-carbamoyl-L-aspartate + phosphate + H(+). It functions in the pathway pyrimidine metabolism; UMP biosynthesis via de novo pathway; (S)-dihydroorotate from bicarbonate: step 2/3. In terms of biological role, catalyzes the condensation of carbamoyl phosphate and aspartate to form carbamoyl aspartate and inorganic phosphate, the committed step in the de novo pyrimidine nucleotide biosynthesis pathway. The polypeptide is Aspartate carbamoyltransferase catalytic subunit (Christiangramia forsetii (strain DSM 17595 / CGMCC 1.15422 / KT0803) (Gramella forsetii)).